We begin with the raw amino-acid sequence, 591 residues long: Calnexin (591 aa).

The signal sequence occupies residues 1-20 (MEGKWLLCLLLVLGTAAVEA). Topologically, residues 21–482 (HDGHDDDAID…QMLEAAEERP (462 aa)) are lumenal. Ca(2+)-binding residues include Ser75 and Asp118. Lys138 bears the N6-acetyllysine mark. Cys161 and Cys195 are joined by a disulfide. An alpha-D-glucoside-binding residues include Tyr165, Lys167, Tyr186, and Asp193. A disordered region spans residues 261–347 (GNLLNDMTPP…EKPEDWDEDM (87 aa)). The segment covering 275-320 (REIEDPEDRKPEDWDERPKIADPDAVKPDDWDEDAPSKIPDEEATK) has biased composition (basic and acidic residues). The p domain (Extended arm) stretch occupies residues 277–410 (IEDPEDRKPE…RKIPNPDFFE (134 aa)). 5 repeat units span residues 279-291 (DPEDRKPEDWDER), 296-308 (DPDAVKPDDWDED), 315-327 (DEEATKPEGWLDD), 334-346 (DPDAEKPEDWDED), and 349-359 (GEWEAPQIANP). 4 X approximate repeats regions lie at residues 279 to 346 (DPED…WDED) and 349 to 406 (GEWE…IPNP). The span at 324-347 (WLDDEPEYIPDPDAEKPEDWDEDM) shows a compositional bias: acidic residues. The interval 327–360 (DEPEYIPDPDAEKPEDWDEDMDGEWEAPQIANPK) is interaction with PPIB. Cys361 and Cys367 form a disulfide bridge. Repeat copies occupy residues 368-378 (GVWQRPMIDNP), 382-392 (GKWKPPMIDNP), and 396-406 (GIWKPRKIPNP). Glu426 lines the an alpha-D-glucoside pocket. Position 437 (Asp437) interacts with Ca(2+). A helical membrane pass occupies residues 483-503 (WLWVVYILTVALPVFLVILFC). 2 S-palmitoyl cysteine lipidation sites follow: Cys503 and Cys504. At 504–591 (CSGKKQSNAM…SPRNRKPRRE (88 aa)) the chain is on the cytoplasmic side. Positions 504 to 591 (CSGKKQSNAM…SPRNRKPRRE (88 aa)) are sufficient to mediate interaction with SGIP1. Residues 514-539 (EYKKTDAPQPDVKDEEGKEEEKNKRD) show a composition bias toward basic and acidic residues. Residues 514-591 (EYKKTDAPQP…SPRNRKPRRE (78 aa)) form a disordered region. Ser553 is subject to Phosphoserine. Over residues 555-568 (AEEDGVTGSQDEED) the composition is skewed to acidic residues. The residue at position 561 (Thr561) is a Phosphothreonine. Ser563 carries the post-translational modification Phosphoserine; by MAPK3. At Ser582 the chain carries Phosphoserine.

It belongs to the calreticulin family. As to quaternary structure, interacts with MAPK3/ERK1. Interacts with KCNH2. Associates with ribosomes. The palmitoylated form interacts with the ribosome-translocon complex component SSR1, promoting efficient folding of glycoproteins. Interacts with SERPINA2P/SERPINA2 and with the S and Z variants of SERPINA1. Interacts with SGIP1; involved in negative regulation of endocytosis. Interacts with PPIB. Interacts with SMIM22. Interacts with TMX2. Interacts with TMEM35A/NACHO. Interacts with CHRNA7. Interacts with reticulophagy regulators RETREG2 and RETREG3. Interacts with DNM1L; may form part of a larger protein complex at the ER-mitochondrial interface during mitochondrial fission. Interacts with ADAM7. Post-translationally, phosphorylated at Ser-563 by MAPK3/ERK1. Phosphorylation by MAPK3/ERK1 increases its association with ribosomes. In terms of processing, palmitoylation by DHHC6 leads to the preferential localization to the perinuclear rough ER. It mediates the association of calnexin with the ribosome-translocon complex (RTC) which is required for efficient folding of glycosylated proteins. Ubiquitinated, leading to proteasomal degradation. Probably ubiquitinated by ZNRF4. In terms of tissue distribution, expressed in sperm (at protein level).

The protein resides in the endoplasmic reticulum membrane. Its subcellular location is the mitochondrion membrane. It localises to the melanosome membrane. In terms of biological role, calcium-binding protein that interacts with newly synthesized monoglucosylated glycoproteins in the endoplasmic reticulum. It may act in assisting protein assembly and/or in the retention within the ER of unassembled protein subunits. It seems to play a major role in the quality control apparatus of the ER by the retention of incorrectly folded proteins. Associated with partial T-cell antigen receptor complexes that escape the ER of immature thymocytes, it may function as a signaling complex regulating thymocyte maturation. Additionally it may play a role in receptor-mediated endocytosis at the synapse. The polypeptide is Calnexin (Canx) (Mus musculus (Mouse)).